The primary structure comprises 419 residues: UDP-N-acetylglucosamine 1-carboxyvinyltransferase (419 aa).

Residue 22–23 (KN) participates in phosphoenolpyruvate binding. Arginine 91 is a binding site for UDP-N-acetyl-alpha-D-glucosamine. Cysteine 115 acts as the Proton donor in catalysis. 2-(S-cysteinyl)pyruvic acid O-phosphothioketal is present on cysteine 115. Residues 120–124 (RPVDL), 160–163 (KVSV), aspartate 305, and valine 327 contribute to the UDP-N-acetyl-alpha-D-glucosamine site.

It belongs to the EPSP synthase family. MurA subfamily.

Its subcellular location is the cytoplasm. It carries out the reaction phosphoenolpyruvate + UDP-N-acetyl-alpha-D-glucosamine = UDP-N-acetyl-3-O-(1-carboxyvinyl)-alpha-D-glucosamine + phosphate. It participates in cell wall biogenesis; peptidoglycan biosynthesis. Functionally, cell wall formation. Adds enolpyruvyl to UDP-N-acetylglucosamine. This Salmonella arizonae (strain ATCC BAA-731 / CDC346-86 / RSK2980) protein is UDP-N-acetylglucosamine 1-carboxyvinyltransferase.